A 404-amino-acid chain; its full sequence is Cysteine desulfurase IscS (404 aa).

Pyridoxal 5'-phosphate-binding positions include 75–76 (AT), Asn155, Gln183, and 203–205 (SAH). At Lys206 the chain carries N6-(pyridoxal phosphate)lysine. Thr243 is a pyridoxal 5'-phosphate binding site. The Cysteine persulfide intermediate role is filled by Cys328. A [2Fe-2S] cluster-binding site is contributed by Cys328.

Belongs to the class-V pyridoxal-phosphate-dependent aminotransferase family. NifS/IscS subfamily. In terms of assembly, homodimer. Forms a heterotetramer with IscU, interacts with other sulfur acceptors. Requires pyridoxal 5'-phosphate as cofactor.

The protein localises to the cytoplasm. The enzyme catalyses (sulfur carrier)-H + L-cysteine = (sulfur carrier)-SH + L-alanine. Its pathway is cofactor biosynthesis; iron-sulfur cluster biosynthesis. Functionally, master enzyme that delivers sulfur to a number of partners involved in Fe-S cluster assembly, tRNA modification or cofactor biosynthesis. Catalyzes the removal of elemental sulfur atoms from cysteine to produce alanine. Functions as a sulfur delivery protein for Fe-S cluster synthesis onto IscU, an Fe-S scaffold assembly protein, as well as other S acceptor proteins. The sequence is that of Cysteine desulfurase IscS from Shewanella sediminis (strain HAW-EB3).